Consider the following 397-residue polypeptide: MLLVNRAITLNLVKRCCWRSTMFMTPKRFLGTSEEESTAALLLQKNLIQRNNMLYGHGSGTIRCTVFDAGGNIVSPALDIKREELVAKHGLLPRDLRKIEKSRKNDLVPSFLVRKNGILVSLATIKTLIKPDMVIVFDSFGSLNSTSHKAFLNSLKLRLQNLDMVELKKDPLPYEFRALESIFISALSNLTSEMNVQVTICKGILQDLEYSITRDKLKFLLGQNKKLSNFYKKTVLIRDMLDDLLEQSDVLCSMYLSDLKNGVEHKDDDHSEIEMLLETYHNHLDEIVQITENIISNVKTTEEIINIILDSNRNQLMLLGIRFSIGMLSLGGPIFIGSLYGMNLENFIEETDYGFIAASAIGMISLGALYFYSIKHLHKLQKMSLFNYTNYARDVKK.

Residues 1–37 (MLLVNRAITLNLVKRCCWRSTMFMTPKRFLGTSEEES) constitute a mitochondrion transit peptide. A helical transmembrane segment spans residues 316–336 (LMLLGIRFSIGMLSLGGPIFI). Positions 340 to 343 (YGMN) match the YGMN motif. A helical membrane pass occupies residues 354–374 (GFIAASAIGMISLGALYFYSI).

Belongs to the CorA metal ion transporter (MIT) (TC 1.A.35) family. Forms homooligomers. Interacts with MRS2.

The protein resides in the mitochondrion inner membrane. In terms of biological role, mitochondrial inner membrane magnesium transporter required for mitochondrial magnesium homeostasis. Modulates the conductance of the MRS2 channel. Involved in the splicing of mRNA group II introns in mitochondria by affecting mitochondrial magnesium concentrations, which are critical for group II intron splicing. The sequence is that of Mitochondrial inner membrane magnesium transporter LPE10 (LPE10) from Candida glabrata (strain ATCC 2001 / BCRC 20586 / JCM 3761 / NBRC 0622 / NRRL Y-65 / CBS 138) (Yeast).